Consider the following 40-residue polypeptide: Large ribosomal subunit protein bL33c (40 aa).

This sequence belongs to the bacterial ribosomal protein bL33 family.

Its subcellular location is the plastid. The protein resides in the chloroplast. This chain is Large ribosomal subunit protein bL33c (rpl33), found in Pisum sativum (Garden pea).